A 331-amino-acid polypeptide reads, in one-letter code: Hydroxyacylglutathione hydrolase 1, mitochondrial (331 aa).

Residues methionine 1–serine 76 constitute a mitochondrion transit peptide. Residues histidine 131 and histidine 133 each contribute to the Zn(2+) site. Positions 135 and 136 each coordinate Fe cation. Residues histidine 189 and aspartate 208 each coordinate Zn(2+). Fe cation is bound at residue aspartate 208. Position 246 to 248 (arginine 246 to asparagine 248) interacts with substrate.

The protein belongs to the metallo-beta-lactamase superfamily. Glyoxalase II family. The cofactor is Fe(2+). Fe(3+) is required as a cofactor. Requires Zn(2+) as cofactor. Mainly expressed in roots, flowers and flower buds. Also detected in leaves.

It localises to the mitochondrion. It carries out the reaction an S-(2-hydroxyacyl)glutathione + H2O = a 2-hydroxy carboxylate + glutathione + H(+). The protein operates within secondary metabolite metabolism; methylglyoxal degradation; (R)-lactate from methylglyoxal: step 2/2. In terms of biological role, thiolesterase that catalyzes the hydrolysis of S-D-lactoyl-glutathione to form glutathione and D-lactic acid. This chain is Hydroxyacylglutathione hydrolase 1, mitochondrial (GLX2-1), found in Arabidopsis thaliana (Mouse-ear cress).